Consider the following 338-residue polypeptide: Acyl-CoA-binding domain-containing protein 1 (338 aa).

A helical; Signal-anchor transmembrane segment spans residues 11–31 (IIFGLIFAYLLAKLISILLAF). Residues Asn-35 and Asn-41 are each glycosylated (N-linked (GlcNAc...) asparagine). The interval 69–89 (AEQGSLRGDEDESDDDDWEGV) is disordered. A compositionally biased stretch (acidic residues) spans 77 to 89 (DEDESDDDDWEGV). In terms of domain architecture, ACB spans 94-184 (LDEAFSAATA…VTQLYPAWVE (91 aa)). Residues 126–130 (YGLYK), Lys-152, and Tyr-171 contribute to the an acyl-CoA site. An N-linked (GlcNAc...) asparagine glycan is attached at Asn-191. ANK repeat units follow at residues 217-246 (LKID…PVNA), 250-279 (EGRT…DVNA), 283-312 (EGQT…DTTI), and 316-338 (DGNS…KDSN).

Belongs to the ACBP family. In terms of assembly, interacts with RAP2-12. Binds to SMO1-1 and SMO1-2. In terms of processing, glycosylated. In seeds, localized in the outer integument. Expressed at low levels in roots, stems, leaves, flowers, and siliques, especially within seeds.

It localises to the cell membrane. Its subcellular location is the secreted. It is found in the cell wall. The protein localises to the endoplasmic reticulum membrane. Binds medium- and long-chain acyl-CoA esters with very high affinity. Can interact in vitro with arachidonyl-CoA, barely with oleoyl-CoA, but not with palmitoyl-CoA. Confers tolerance and binds to lead ions Pb(2+), probably by promoting lead translocation from roots to shoots. May function as an intracellular carrier of acyl-CoA esters. Modulates negatively sterol synthesis during embryogenesis and gametophytes development via interactions with SMO1-1 and SMO1-2; sterols serve as lipid modulators for gene expression of homeodomain-leucine zipper IV transcription factors. In Arabidopsis thaliana (Mouse-ear cress), this protein is Acyl-CoA-binding domain-containing protein 1.